Consider the following 243-residue polypeptide: Small ribosomal subunit protein mS23 (243 aa).

Belongs to the mitochondrion-specific ribosomal protein mS23 family. As to quaternary structure, component of the mitochondrial small ribosomal subunit.

It localises to the mitochondrion. In Emericella nidulans (strain FGSC A4 / ATCC 38163 / CBS 112.46 / NRRL 194 / M139) (Aspergillus nidulans), this protein is Small ribosomal subunit protein mS23 (rsm25).